The sequence spans 445 residues: Putative ATP-dependent RNA helicase L538 (445 aa).

A Helicase ATP-binding domain is found at 14–151; that stretch reads IEFMKNNRGV…AVLVNIVRGE (138 aa). 27 to 34 is a binding site for ATP; the sequence is HSTGAGKT. The DEAH box motif lies at 101 to 104; sequence DEAH. The 170-residue stretch at 273–442 folds into the Helicase C-terminal domain; the sequence is KIEDIMKYII…VIDASIENNY (170 aa).

This sequence belongs to the DEAD box helicase family. DEAH subfamily.

The protein localises to the virion. The enzyme catalyses ATP + H2O = ADP + phosphate + H(+). This is Putative ATP-dependent RNA helicase L538 from Acanthamoeba polyphaga mimivirus (APMV).